A 550-amino-acid polypeptide reads, in one-letter code: Glucose-6-phosphate isomerase (550 aa).

Glu-356 functions as the Proton donor in the catalytic mechanism. Catalysis depends on residues His-387 and Lys-515.

Belongs to the GPI family.

It localises to the cytoplasm. It catalyses the reaction alpha-D-glucose 6-phosphate = beta-D-fructose 6-phosphate. The protein operates within carbohydrate biosynthesis; gluconeogenesis. Its pathway is carbohydrate degradation; glycolysis; D-glyceraldehyde 3-phosphate and glycerone phosphate from D-glucose: step 2/4. Catalyzes the reversible isomerization of glucose-6-phosphate to fructose-6-phosphate. The chain is Glucose-6-phosphate isomerase from Vibrio cholerae serotype O1 (strain ATCC 39541 / Classical Ogawa 395 / O395).